Here is a 405-residue protein sequence, read N- to C-terminus: Argininosuccinate synthase (405 aa).

ATP contacts are provided by residues A11–S19 and A38. Residues Y91 and S96 each contribute to the L-citrulline site. Residue G121 coordinates ATP. The L-aspartate site is built by T123, N127, and D128. N127 is an L-citrulline binding site. The L-citrulline site is built by R131, S182, S191, E267, and Y279.

The protein belongs to the argininosuccinate synthase family. Type 1 subfamily. As to quaternary structure, homotetramer.

The protein localises to the cytoplasm. The enzyme catalyses L-citrulline + L-aspartate + ATP = 2-(N(omega)-L-arginino)succinate + AMP + diphosphate + H(+). It participates in amino-acid biosynthesis; L-arginine biosynthesis; L-arginine from L-ornithine and carbamoyl phosphate: step 2/3. In Sphingopyxis alaskensis (strain DSM 13593 / LMG 18877 / RB2256) (Sphingomonas alaskensis), this protein is Argininosuccinate synthase.